Reading from the N-terminus, the 129-residue chain is MESSRLRLLPVLGAALLLLLPLLGAGAQEDAELQPRALDIYSAVDDASHEKELPRRQLRAPGAVLQIEALQEVLKKLKSKRIPIYEKKYGQVPMCDAGEQCAVRKGARIGKLCDCPRGTSCNSFLLKCL.

The signal sequence occupies residues 1–27; that stretch reads MESSRLRLLPVLGAALLLLLPLLGAGA. Y41 is subject to Phosphotyrosine. S48 carries the phosphoserine modification. 3 cysteine pairs are disulfide-bonded: C95-C113, C101-C121, and C115-C128.

It belongs to the CART family. As to expression, neuroendocrine tissues. Predominantly expressed in the hypothalamus, pituitary, and longitudinal muscle-myenteric plexus. Abundant expression is also seen in the midbrain/thalamus and eye. A lower level expression is seen in the other brain regions and adrenal.

Its subcellular location is the secreted. Functionally, satiety factor closely associated with the actions of leptin and neuropeptide y; this anorectic peptide inhibits both normal and starvation-induced feeding and completely blocks the feeding response induced by neuropeptide Y and regulated by leptin in the hypothalamus. The protein is Cocaine- and amphetamine-regulated transcript protein (Cartpt) of Rattus norvegicus (Rat).